The sequence spans 199 residues: Probable GTP-binding protein EngB (199 aa).

Residues 21–195 (IYTEIAFLGR…EQKIILESLG (175 aa)) form the EngB-type G domain. GTP is bound by residues 29-36 (GRSNVGKS), 56-60 (GKTQL), 81-84 (DLPG), 151-154 (TKAD), and 174-176 (VSN). Mg(2+) is bound by residues S36 and T58.

Belongs to the TRAFAC class TrmE-Era-EngA-EngB-Septin-like GTPase superfamily. EngB GTPase family. It depends on Mg(2+) as a cofactor.

Necessary for normal cell division and for the maintenance of normal septation. The protein is Probable GTP-binding protein EngB of Campylobacter lari (strain RM2100 / D67 / ATCC BAA-1060).